The following is a 496-amino-acid chain: Apolipoprotein N-acyltransferase (496 aa).

6 helical membrane passes run 23-43 (GIAT…FILW), 50-70 (LANF…LYEL), 84-104 (LIIS…LVYL), 126-146 (LTIK…ILSQ), 171-191 (WIGA…IYLI), and 205-225 (FLFG…TNPI). In terms of domain architecture, CN hydrolase spans 236–464 (WQTNMPTREK…NDVVNPNFSI (229 aa)). Glu-276 (proton acceptor) is an active-site residue. Residue Lys-325 is part of the active site. Cys-374 functions as the Nucleophile in the catalytic mechanism. Residues 476-496 (PLFLLCLFLIGLNLYFGKFTN) traverse the membrane as a helical segment.

Belongs to the CN hydrolase family. Apolipoprotein N-acyltransferase subfamily.

Its subcellular location is the cell inner membrane. The enzyme catalyses N-terminal S-1,2-diacyl-sn-glyceryl-L-cysteinyl-[lipoprotein] + a glycerophospholipid = N-acyl-S-1,2-diacyl-sn-glyceryl-L-cysteinyl-[lipoprotein] + a 2-acyl-sn-glycero-3-phospholipid + H(+). The protein operates within protein modification; lipoprotein biosynthesis (N-acyl transfer). Its function is as follows. Catalyzes the phospholipid dependent N-acylation of the N-terminal cysteine of apolipoprotein, the last step in lipoprotein maturation. The polypeptide is Apolipoprotein N-acyltransferase (Prochlorococcus marinus subsp. pastoris (strain CCMP1986 / NIES-2087 / MED4)).